The following is a 160-amino-acid chain: Non-secretory ribonuclease (160 aa).

The first 27 residues, M1–A27, serve as a signal peptide directing secretion. W34 is a glycosylation site (C-linked (Man) tryptophan). H42 (proton acceptor) is an active-site residue. N-linked (GlcNAc...) asparagine glycosylation is present at N44. 4 disulfide bridges follow: C50-C110, C64-C122, C82-C137, and C89-C98. The residue at position 60 (Y60) is a 3'-nitrotyrosine. K65–T69 is a binding site for substrate. Residues N92, N111, N118, and N138 are each glycosylated (N-linked (GlcNAc...) asparagine). The active-site Proton donor is the H155.

The protein belongs to the pancreatic ribonuclease family. As to quaternary structure, interacts with and forms a tight 1:1 complex with RNH1. Dimerization of two such complexes may occur.

Its subcellular location is the lysosome. It is found in the cytoplasmic granule. It catalyses the reaction an [RNA] containing cytidine + H2O = an [RNA]-3'-cytidine-3'-phosphate + a 5'-hydroxy-ribonucleotide-3'-[RNA].. It carries out the reaction an [RNA] containing uridine + H2O = an [RNA]-3'-uridine-3'-phosphate + a 5'-hydroxy-ribonucleotide-3'-[RNA].. In terms of biological role, this is a non-secretory ribonuclease. It is a pyrimidine specific nuclease with a slight preference for U. Cytotoxin and helminthotoxin. Possesses a wide variety of biological activities. The chain is Non-secretory ribonuclease (RNASE2) from Chlorocebus aethiops (Green monkey).